The sequence spans 438 residues: GTPase Der (438 aa).

EngA-type G domains are found at residues 4–168 and 177–352; these read PIVA…KNEG and IKIA…DNYC. GTP contacts are provided by residues 10-17, 57-61, 120-123, 183-190, 230-234, and 295-298; these read GRPNVGKS, DTGGI, NKID, GKPNVGKS, DTAGV, and NKWD. In terms of domain architecture, KH-like spans 353-437; the sequence is KQIKTGILND…GIKLEFRERK (85 aa).

Belongs to the TRAFAC class TrmE-Era-EngA-EngB-Septin-like GTPase superfamily. EngA (Der) GTPase family. As to quaternary structure, associates with the 50S ribosomal subunit.

GTPase that plays an essential role in the late steps of ribosome biogenesis. This is GTPase Der from Clostridium kluyveri (strain NBRC 12016).